The primary structure comprises 319 residues: Ribosomal RNA small subunit methyltransferase H (319 aa).

S-adenosyl-L-methionine contacts are provided by residues 38–40 (GGH), Asp58, Phe82, Asp104, and Gln111.

The protein belongs to the methyltransferase superfamily. RsmH family.

It is found in the cytoplasm. It catalyses the reaction cytidine(1402) in 16S rRNA + S-adenosyl-L-methionine = N(4)-methylcytidine(1402) in 16S rRNA + S-adenosyl-L-homocysteine + H(+). Its function is as follows. Specifically methylates the N4 position of cytidine in position 1402 (C1402) of 16S rRNA. This chain is Ribosomal RNA small subunit methyltransferase H, found in Histophilus somni (strain 129Pt) (Haemophilus somnus).